The following is a 269-amino-acid chain: GTP cyclohydrolase FolE2 (269 aa).

This sequence belongs to the GTP cyclohydrolase IV family.

It catalyses the reaction GTP + H2O = 7,8-dihydroneopterin 3'-triphosphate + formate + H(+). The protein operates within cofactor biosynthesis; 7,8-dihydroneopterin triphosphate biosynthesis; 7,8-dihydroneopterin triphosphate from GTP: step 1/1. Converts GTP to 7,8-dihydroneopterin triphosphate. The chain is GTP cyclohydrolase FolE2 from Burkholderia multivorans (strain ATCC 17616 / 249).